We begin with the raw amino-acid sequence, 411 residues long: AT-hook motif nuclear-localized protein 14 (411 aa).

Disordered stretches follow at residues 1–32 (MDPN…QRLT), 54–164 (ASTG…LGSV), 289–348 (KDAA…HQAG), and 366–411 (THSR…QIPD). Residues 7 to 19 (HHHHQQQQLHHLH) show a composition bias toward basic residues. Residues 20 to 29 (QQQQQQQQQQ) are compositionally biased toward low complexity. Over residues 54–66 (ASTGNAVPSSNNG) the composition is skewed to polar residues. The Bipartite nuclear localization signal signature appears at 105-113 (KRKRGRPRK). A DNA-binding region (a.T hook) is located at residues 105–117 (KRKRGRPRKYVTP). Composition is skewed to low complexity over residues 120-135 (ALAA…SSSA) and 144-159 (VTGG…SKKS). Positions 165–305 (GKTGQCFTPH…GKGDASNSGS (141 aa)) constitute a PPC domain. Over residues 306-315 (RLTSPVSSGQ) the composition is skewed to polar residues. Residues 374–390 (RGGGNSGHDGRGGGGYD) show a composition bias toward gly residues.

Its subcellular location is the nucleus. In terms of biological role, transcription factor that specifically binds AT-rich DNA sequences related to the nuclear matrix attachment regions (MARs). This is AT-hook motif nuclear-localized protein 14 from Arabidopsis thaliana (Mouse-ear cress).